Reading from the N-terminus, the 119-residue chain is Large ribosomal subunit protein bL20 (119 aa).

The protein belongs to the bacterial ribosomal protein bL20 family.

Its function is as follows. Binds directly to 23S ribosomal RNA and is necessary for the in vitro assembly process of the 50S ribosomal subunit. It is not involved in the protein synthesizing functions of that subunit. The protein is Large ribosomal subunit protein bL20 of Nitrobacter hamburgensis (strain DSM 10229 / NCIMB 13809 / X14).